We begin with the raw amino-acid sequence, 255 residues long: Phosphatidylcholine synthase (255 aa).

The Cytoplasmic segment spans residues 1-13; it reads MNPIKPPFTLNQY. The helical transmembrane segment at 14-34 threads the bilayer; sequence FAAWFVHVFTASAACIGVFSL. Topologically, residues 35 to 42 are periplasmic; that stretch reads YKIYQHDY. A helical membrane pass occupies residues 43-63; the sequence is VFALWLMAITVFIDAVDGSLA. At 64–76 the chain is on the cytoplasmic side; that stretch reads RLVHVKSVLPKID. The chain crosses the membrane as a helical span at residues 77–97; sequence GALLDNIVDYLNYVITPCFFL. Topologically, residues 98-103 are periplasmic; that stretch reads LVKPGM. The helical transmembrane segment at 104–124 threads the bilayer; the sequence is LPADYVVPITAAITITSAYQF. The Cytoplasmic segment spans residues 125–133; the sequence is CQDDAKTPD. A helical membrane pass occupies residues 134-154; the sequence is HFFKGFPCYWNITVFYMYIFN. A topological domain (periplasmic) is located at residue Thr-155. The helical transmembrane segment at 156-175 threads the bilayer; it reads SMIVNTVLLSLFCVLIFIPV. At 176 to 190 the chain is on the cytoplasmic side; the sequence is KYVYPSRLDYLTESR. The helical transmembrane segment at 191-211 threads the bilayer; sequence VLKILMHCCSALYGISSFCLL. Topologically, residues 212–217 are periplasmic; the sequence is VNYPET. The helical transmembrane segment at 218 to 238 threads the bilayer; sequence NKLWVSLSLGYVGMYLFLSFY. Residues 239-255 are Cytoplasmic-facing; it reads RTYYPMFKAKITANNKD.

It belongs to the CDP-alcohol phosphatidyltransferase class-I family. It depends on Mn(2+) as a cofactor.

It is found in the cell inner membrane. The catalysed reaction is a CDP-1,2-diacyl-sn-glycerol + choline = a 1,2-diacyl-sn-glycero-3-phosphocholine + CMP + H(+). Functionally, condenses choline with CDP-diglyceride to produce phosphatidylcholine and CMP. Affects virulence of this bacterium when there is a complete loss of phosphatidylcholine formation due to absence of both the synthase (pcs) and the methylation (pmtA) pathways. Reduced virulence results from lowered yields of bacteria within host macrophages and because of loss of high multiplicity cytotoxicity. This Legionella pneumophila subsp. pneumophila (strain Philadelphia 1 / ATCC 33152 / DSM 7513) protein is Phosphatidylcholine synthase.